A 157-amino-acid polypeptide reads, in one-letter code: Catabolic 3-dehydroquinase (157 aa).

The active-site Proton acceptor is Tyr27. Substrate contacts are provided by Asn80, His86, and Asp93. The Proton donor role is filled by His106. Residues 107–108 (VS) and Arg117 each bind substrate.

The protein belongs to the type-II 3-dehydroquinase family. Homododecamer. Adopts a ring-like structure, composed of an arrangement of two hexameric rings stacked on top of one another.

The catalysed reaction is 3-dehydroquinate = 3-dehydroshikimate + H2O. Its pathway is aromatic compound metabolism; 3,4-dihydroxybenzoate biosynthesis; 3,4-dihydroxybenzoate from 3-dehydroquinate: step 1/2. In terms of biological role, is involved in the catabolism of quinate. Allows the utilization of quinate as carbon source via the beta-ketoadipate pathway. This is Catabolic 3-dehydroquinase from Pyricularia oryzae (strain 70-15 / ATCC MYA-4617 / FGSC 8958) (Rice blast fungus).